Consider the following 338-residue polypeptide: tRNA methyltransferase 10 homolog A (338 aa).

Disordered regions lie at residues 1–91 and 296–338; these read MSSE…DRKR and RVEG…SVPH. Position 22 is a phosphoserine (S22). Positions 52-80 form a coiled coil; sequence KQWEEQRELRKQKRKEKRKRKQLERQCQP. Positions 61–73 are enriched in basic residues; the sequence is RKQKRKEKRKRKQ. The SAM-dependent MTase TRM10-type domain maps to 88-279; it reads DRKRIRRDVV…TILPQRKGAV (192 aa). The span at 308 to 328 shows a compositional bias: basic and acidic residues; it reads EENRHELDSTHEEEKQDKENS. Polar residues predominate over residues 329–338; that stretch reads TESTVNSVPH. Phosphoserine is present on S335.

It belongs to the class IV-like SAM-binding methyltransferase superfamily. TRM10 family. Interacts with tRNA.

The protein localises to the nucleus. Its subcellular location is the nucleolus. It carries out the reaction guanosine(9) in tRNA + S-adenosyl-L-methionine = N(1)-methylguanosine(9) in tRNA + S-adenosyl-L-homocysteine + H(+). S-adenosyl-L-methionine-dependent guanine N(1)-methyltransferase that catalyzes the formation of N(1)-methylguanine at position 9 (m1G9) in tRNAs. Probably not able to catalyze formation of N(1)-methyladenine at position 9 (m1A9) in tRNAs. The chain is tRNA methyltransferase 10 homolog A (TRMT10A) from Bos taurus (Bovine).